A 295-amino-acid polypeptide reads, in one-letter code: Inositol monophosphatase 1 (295 aa).

Residues Glu-73, Asp-92, Ile-94, Asp-95, and Asp-231 each coordinate Mg(2+). Glu-73 is a binding site for substrate. Substrate-binding positions include 94 to 97 (IDGT) and Asp-231.

This sequence belongs to the inositol monophosphatase superfamily. It depends on Mg(2+) as a cofactor.

It localises to the cytoplasm. The protein resides in the nucleus. The enzyme catalyses a myo-inositol phosphate + H2O = myo-inositol + phosphate. It participates in polyol metabolism; myo-inositol biosynthesis; myo-inositol from D-glucose 6-phosphate: step 2/2. Its activity is regulated as follows. Inhibited by Li(+) and Na(+). Responsible for the provision of inositol required for synthesis of phosphatidylinositol and polyphosphoinositides. The sequence is that of Inositol monophosphatase 1 (INM1) from Saccharomyces cerevisiae (strain ATCC 204508 / S288c) (Baker's yeast).